The sequence spans 333 residues: Sphingomyelinase C (333 aa).

A signal peptide spans 1-26 (MKGKLLKGVLSLGVGLGALYSGTSAQ). A disulfide bridge links C150 with C186.

Belongs to the neutral sphingomyelinase family. It depends on Mg(2+) as a cofactor. The N-terminus is blocked.

The protein localises to the secreted. It catalyses the reaction a sphingomyelin + H2O = phosphocholine + an N-acylsphing-4-enine + H(+). Its activity is regulated as follows. Activated by cobalt and manganese ions. Required, with sphingomyelinase, to effect target cell lysis (hemolysis). The protein is Sphingomyelinase C (cerB) of Bacillus cereus.